The following is a 307-amino-acid chain: Aspartate carbamoyltransferase catalytic subunit (307 aa).

Residues arginine 49 and threonine 50 each contribute to the carbamoyl phosphate site. Lysine 77 contributes to the L-aspartate binding site. Carbamoyl phosphate contacts are provided by arginine 99, histidine 127, and glutamine 130. 2 residues coordinate L-aspartate: arginine 160 and arginine 211. 2 residues coordinate carbamoyl phosphate: alanine 250 and proline 251.

It belongs to the aspartate/ornithine carbamoyltransferase superfamily. ATCase family. As to quaternary structure, heterododecamer (2C3:3R2) of six catalytic PyrB chains organized as two trimers (C3), and six regulatory PyrI chains organized as three dimers (R2).

The enzyme catalyses carbamoyl phosphate + L-aspartate = N-carbamoyl-L-aspartate + phosphate + H(+). The protein operates within pyrimidine metabolism; UMP biosynthesis via de novo pathway; (S)-dihydroorotate from bicarbonate: step 2/3. In terms of biological role, catalyzes the condensation of carbamoyl phosphate and aspartate to form carbamoyl aspartate and inorganic phosphate, the committed step in the de novo pyrimidine nucleotide biosynthesis pathway. The protein is Aspartate carbamoyltransferase catalytic subunit of Bacillus pumilus (strain SAFR-032).